Here is a 195-residue protein sequence, read N- to C-terminus: Imidazoleglycerol-phosphate dehydratase (195 aa).

This sequence belongs to the imidazoleglycerol-phosphate dehydratase family.

Its subcellular location is the cytoplasm. It catalyses the reaction D-erythro-1-(imidazol-4-yl)glycerol 3-phosphate = 3-(imidazol-4-yl)-2-oxopropyl phosphate + H2O. It functions in the pathway amino-acid biosynthesis; L-histidine biosynthesis; L-histidine from 5-phospho-alpha-D-ribose 1-diphosphate: step 6/9. The sequence is that of Imidazoleglycerol-phosphate dehydratase from Endomicrobium trichonymphae.